The primary structure comprises 95 residues: Aspartyl/glutamyl-tRNA(Asn/Gln) amidotransferase subunit C (95 aa).

This sequence belongs to the GatC family. As to quaternary structure, heterotrimer of A, B and C subunits.

It carries out the reaction L-glutamyl-tRNA(Gln) + L-glutamine + ATP + H2O = L-glutaminyl-tRNA(Gln) + L-glutamate + ADP + phosphate + H(+). The enzyme catalyses L-aspartyl-tRNA(Asn) + L-glutamine + ATP + H2O = L-asparaginyl-tRNA(Asn) + L-glutamate + ADP + phosphate + 2 H(+). Functionally, allows the formation of correctly charged Asn-tRNA(Asn) or Gln-tRNA(Gln) through the transamidation of misacylated Asp-tRNA(Asn) or Glu-tRNA(Gln) in organisms which lack either or both of asparaginyl-tRNA or glutaminyl-tRNA synthetases. The reaction takes place in the presence of glutamine and ATP through an activated phospho-Asp-tRNA(Asn) or phospho-Glu-tRNA(Gln). In Pseudomonas syringae pv. syringae (strain B728a), this protein is Aspartyl/glutamyl-tRNA(Asn/Gln) amidotransferase subunit C.